Reading from the N-terminus, the 239-residue chain is Large ribosomal subunit protein uL1 (239 aa).

Belongs to the universal ribosomal protein uL1 family. In terms of assembly, part of the 50S ribosomal subunit.

In terms of biological role, binds directly to 23S rRNA. The L1 stalk is quite mobile in the ribosome, and is involved in E site tRNA release. Protein L1 is also a translational repressor protein, it controls the translation of the L11 operon by binding to its mRNA. This Acidothermus cellulolyticus (strain ATCC 43068 / DSM 8971 / 11B) protein is Large ribosomal subunit protein uL1.